A 483-amino-acid polypeptide reads, in one-letter code: Altronate oxidoreductase (483 aa).

18–29 (IIQFGEGNFLRA) contributes to the NAD(+) binding site.

This sequence belongs to the mannitol dehydrogenase family. UxaB subfamily.

The catalysed reaction is D-altronate + NAD(+) = keto-D-tagaturonate + NADH + H(+). It participates in carbohydrate metabolism; pentose and glucuronate interconversion. The sequence is that of Altronate oxidoreductase from Shigella flexneri serotype 5b (strain 8401).